A 291-amino-acid chain; its full sequence is uncharacterized protein (291 aa).

The HTH araC/xylS-type domain occupies 191–289; that stretch reads KQMLNWIHLH…NMTPLSYKKM (99 aa). 2 consecutive DNA-binding regions (H-T-H motif) follow at residues 208 to 229 and 256 to 279; these read EDIA…KRML and VTEV…QQAM.

This is an uncharacterized protein from Bacillus subtilis (strain 168).